We begin with the raw amino-acid sequence, 351 residues long: Polycomb group RING finger protein 6 (351 aa).

Residues 1 to 114 (MEEAETDATE…FSLRLESGRA (114 aa)) are disordered. The span at 9–19 (TENKRASEAKR) shows a compositional bias: basic and acidic residues. The segment covering 24–37 (LPPPPPPISPPALI) has biased composition (pro residues). At S32 the chain carries Phosphoserine. Over residues 38–51 (PAPAAGEEGPASLA) the composition is skewed to low complexity. Over residues 62-80 (RPPELEPERSLGRLRGRFE) the composition is skewed to basic and acidic residues. A coiled-coil region spans residues 69–110 (ERSLGRLRGRFEDYDEELEEDEEMEEEEEEEEEMSHFSLRLE). Over residues 81–101 (DYDEELEEDEEMEEEEEEEEE) the composition is skewed to acidic residues. At S116 the chain carries Phosphoserine. The RING-type zinc finger occupies 135–174 (CSICKGYLIDATTITECLHTFCKSCIVRHFYYSNRCPKCN). Residues K224 and K235 each participate in a glycyl lysine isopeptide (Lys-Gly) (interchain with G-Cter in SUMO2) cross-link.

In terms of assembly, component of a PRC1-like complex. Interacts with BMI1/PCGF4, RING1 and RNF2. Interacts with KDM5D. Interacts with CBX4, CBX6, CBX7 and CBX8. In terms of processing, phosphorylated during mitosis.

It localises to the nucleus. Its function is as follows. Transcriptional repressor. May modulate the levels of histone H3K4Me3 by activating KDM5D histone demethylase. Component of a Polycomb group (PcG) multiprotein PRC1-like complex, a complex class required to maintain the transcriptionally repressive state of many genes, including Hox genes, throughout development. PcG PRC1 complex acts via chromatin remodeling and modification of histones; it mediates monoubiquitination of histone H2A 'Lys-119', rendering chromatin heritably changed in its expressibility. Within the PRC1-like complex, regulates RNF2 ubiquitin ligase activity. The chain is Polycomb group RING finger protein 6 (Pcgf6) from Rattus norvegicus (Rat).